We begin with the raw amino-acid sequence, 186 residues long: Dynactin subunit 3 (186 aa).

The residue at position 2 (Ala-2) is an N-acetylalanine. Residues 46 to 66 (NIASKRERVKILYKKIEDLIK) adopt a coiled-coil conformation.

This sequence belongs to the dynactin subunit 3 family. Subunit of dynactin, a multiprotein complex part of a tripartite complex with dynein and a adapter, such as BICDL1, BICD2 or HOOK3. The dynactin complex is built around ACTR1A/ACTB filament and consists of an actin-related filament composed of a shoulder domain, a pointed end and a barbed end. Its length is defined by its flexible shoulder domain. The soulder is composed of 2 DCTN1 subunits, 4 DCTN2 and 2 DCTN3. The 4 DCNT2 (via N-terminus) bind the ACTR1A filament and act as molecular rulers to determine the length. The pointed end is important for binding dynein-dynactin cargo adapters. Consists of 4 subunits: ACTR10, DCNT4, DCTN5 and DCTN6. The barbed end is composed of a CAPZA1:CAPZB heterodimers, which binds ACTR1A/ACTB filament and dynactin and stabilizes dynactin.

The protein resides in the cytoplasm. It is found in the cytoskeleton. The protein localises to the microtubule organizing center. Its subcellular location is the centrosome. It localises to the chromosome. The protein resides in the centromere. It is found in the kinetochore. The protein localises to the spindle. Its subcellular location is the cleavage furrow. It localises to the midbody. Functionally, part of the dynactin complex that activates the molecular motor dynein for ultra-processive transport along microtubules. Together with dynein may be involved in spindle assembly and cytokinesis. The polypeptide is Dynactin subunit 3 (Mus musculus (Mouse)).